The sequence spans 57 residues: Bowman-Birk type proteinase inhibitor B4 (57 aa).

Intrachain disulfides connect cysteine 6-cysteine 55, cysteine 12-cysteine 17, cysteine 26-cysteine 33, and cysteine 30-cysteine 47.

The protein belongs to the Bowman-Birk serine protease inhibitor family. In terms of tissue distribution, expressed in bulb (at protein level).

Functionally, serine protease inhibitor. Inhibits trypsin (Ki = 110 nM) and very weakly inhibits chymotrypsin (Ki =1200 nM). Does not inhibit bacterial subtilisin. The polypeptide is Bowman-Birk type proteinase inhibitor B4 (Hyacinthus orientalis (Common hyacinth)).